A 249-amino-acid chain; its full sequence is NADH-quinone oxidoreductase subunit C (249 aa).

The protein belongs to the complex I 30 kDa subunit family. In terms of assembly, NDH-1 is composed of 14 different subunits. Subunits NuoB, C, D, E, F, and G constitute the peripheral sector of the complex.

The protein resides in the cell inner membrane. It catalyses the reaction a quinone + NADH + 5 H(+)(in) = a quinol + NAD(+) + 4 H(+)(out). NDH-1 shuttles electrons from NADH, via FMN and iron-sulfur (Fe-S) centers, to quinones in the respiratory chain. The immediate electron acceptor for the enzyme in this species is believed to be ubiquinone. Couples the redox reaction to proton translocation (for every two electrons transferred, four hydrogen ions are translocated across the cytoplasmic membrane), and thus conserves the redox energy in a proton gradient. This Stenotrophomonas maltophilia (strain R551-3) protein is NADH-quinone oxidoreductase subunit C.